The chain runs to 930 residues: Isoleucine--tRNA ligase (930 aa).

Positions 57 to 67 match the 'HIGH' region motif; that stretch reads PYANGNIHVGH. L-isoleucyl-5'-AMP is bound at residue Glu554. The 'KMSKS' region motif lies at 595–599; sequence KMSKS. Lys598 provides a ligand contact to ATP.

The protein belongs to the class-I aminoacyl-tRNA synthetase family. IleS type 1 subfamily. As to quaternary structure, monomer.

It is found in the cytoplasm. It carries out the reaction tRNA(Ile) + L-isoleucine + ATP = L-isoleucyl-tRNA(Ile) + AMP + diphosphate. Catalyzes the attachment of isoleucine to tRNA(Ile). As IleRS can inadvertently accommodate and process structurally similar amino acids such as valine, to avoid such errors it has two additional distinct tRNA(Ile)-dependent editing activities. One activity is designated as 'pretransfer' editing and involves the hydrolysis of activated Val-AMP. The other activity is designated 'posttransfer' editing and involves deacylation of mischarged Val-tRNA(Ile). The sequence is that of Isoleucine--tRNA ligase from Streptococcus agalactiae serotype III (strain NEM316).